The following is a 246-amino-acid chain: Uridylate kinase (246 aa).

13-16 (KLSG) provides a ligand contact to ATP. Residue Gly54 coordinates UMP. The ATP site is built by Gly55 and Arg59. Residues Asp74 and 135–142 (AGMPYFST) each bind UMP. Asn163, Tyr169, and Asp172 together coordinate ATP.

This sequence belongs to the UMP kinase family. In terms of assembly, homohexamer.

The protein resides in the cytoplasm. The catalysed reaction is UMP + ATP = UDP + ADP. Its pathway is pyrimidine metabolism; CTP biosynthesis via de novo pathway; UDP from UMP (UMPK route): step 1/1. Its activity is regulated as follows. Inhibited by UTP. Catalyzes the reversible phosphorylation of UMP to UDP. This Bifidobacterium longum (strain NCC 2705) protein is Uridylate kinase.